We begin with the raw amino-acid sequence, 106 residues long: UPF0145 protein azo0572 (106 aa).

It belongs to the UPF0145 family.

The protein is UPF0145 protein azo0572 of Azoarcus sp. (strain BH72).